The following is a 156-amino-acid chain: Transthyretin-like protein 1 (156 aa).

The first 17 residues, 1 to 17, serve as a signal peptide directing secretion; sequence MKIALSFLFLTSTFSNA. A glycan (N-linked (GlcNAc...) asparagine) is linked at asparagine 151.

This sequence belongs to the nematode transthyretin-like family.

Its subcellular location is the secreted. This is Transthyretin-like protein 1 (ttr-1) from Caenorhabditis elegans.